Reading from the N-terminus, the 475-residue chain is MGFKFLEVIKPFCIILPEIEKPQRKIQFREKVLWTAITLFIFLVCCQIPLFGIMSSESADPFYWMRVIMASNRGTLMELGITPIVTSGLIMQLLAGAKLIEVGDTPKDRALFNGAQKLFGMIITIGQAVVYVMTGMYGDPSDMGAGICLLIIIQLFIASLIVLLLDELLQKGYGLGSGISLFIATNICETIVWKSFSPATVNTGRGTEFEGAVIALFHLLATRSDKVRALREAFYRPNLPNLMNLSATILVFGIVIYFQGFRVDLPIKSARYRGQYSSYPIKLFYTSNIPIILQSALVSGLYVISQMLAIRFRGNFFIGLLGVWEDVEGGGPARSYPVALCYYLSPPESFFSMFLDPIHGLLYITFMLGSCAFFSKTWIEVSGSAAKDVAKQLKEQQMVMRGHREKSMIHELNRYIPTAAAFGGLCIGALSVLADFIGAIGSGTGILLAVTIIYQYFEIFVKEQAEVGGMGTLLF.

The next 10 membrane-spanning stretches (helical) occupy residues 33–53, 76–96, 118–138, 145–165, 173–193, 241–261, 289–309, 354–374, 420–440, and 441–461; these read LWTAITLFIFLVCCQIPLFGI, LMELGITPIVTSGLIMQLLAG, LFGMIITIGQAVVYVMTGMYG, AGICLLIIIQLFIASLIVLLL, YGLGSGISLFIATNICETIVW, NLMNLSATILVFGIVIYFQGF, IPIILQSALVSGLYVISQMLA, FLDPIHGLLYITFMLGSCAFF, AAFGGLCIGALSVLADFIGAI, and GSGTGILLAVTIIYQYFEIFV.

The protein belongs to the SecY/SEC61-alpha family. The SEC61 channel-forming translocon complex consists of channel-forming core components SEC61A1, SEC61B and SEC61G and different auxiliary components such as SEC62 and SEC63. The SEC61 channel associates with the multi-pass translocon (MPT) complex. Expressed predominantly in epidermal cells of the embryo.

It localises to the endoplasmic reticulum membrane. Component of SEC61 channel-forming translocon complex that mediates transport of signal peptide-containing precursor polypeptides across the endoplasmic reticulum (ER). Forms a ribosome receptor and a gated pore in the ER membrane, both functions required for cotranslational translocation of nascent polypeptides. May cooperate with auxiliary protein SEC62, SEC63 and HSPA5/BiP to enable post-translational transport of small presecretory proteins. The SEC61 channel is also involved in ER membrane insertion of transmembrane proteins: it mediates membrane insertion of the first few transmembrane segments of proteins, while insertion of subsequent transmembrane regions of multi-pass membrane proteins is mediated by the multi-pass translocon (MPT) complex. The protein is Protein transport protein Sec61 subunit alpha of Halocynthia roretzi (Sea squirt).